The sequence spans 213 residues: Imidazole glycerol phosphate synthase subunit HisH (213 aa).

In terms of domain architecture, Glutamine amidotransferase type-1 spans 1–212 (MLAILDYKAG…HRYCTEAADA (212 aa)). Residue Cys79 is the Nucleophile of the active site. Residues His187 and Glu189 contribute to the active site.

In terms of assembly, heterodimer of HisH and HisF.

It is found in the cytoplasm. It catalyses the reaction 5-[(5-phospho-1-deoxy-D-ribulos-1-ylimino)methylamino]-1-(5-phospho-beta-D-ribosyl)imidazole-4-carboxamide + L-glutamine = D-erythro-1-(imidazol-4-yl)glycerol 3-phosphate + 5-amino-1-(5-phospho-beta-D-ribosyl)imidazole-4-carboxamide + L-glutamate + H(+). The enzyme catalyses L-glutamine + H2O = L-glutamate + NH4(+). The protein operates within amino-acid biosynthesis; L-histidine biosynthesis; L-histidine from 5-phospho-alpha-D-ribose 1-diphosphate: step 5/9. IGPS catalyzes the conversion of PRFAR and glutamine to IGP, AICAR and glutamate. The HisH subunit catalyzes the hydrolysis of glutamine to glutamate and ammonia as part of the synthesis of IGP and AICAR. The resulting ammonia molecule is channeled to the active site of HisF. The sequence is that of Imidazole glycerol phosphate synthase subunit HisH from Nitratidesulfovibrio vulgaris (strain ATCC 29579 / DSM 644 / CCUG 34227 / NCIMB 8303 / VKM B-1760 / Hildenborough) (Desulfovibrio vulgaris).